The chain runs to 488 residues: E3 ubiquitin-protein ligase TRIM34 (488 aa).

The segment at 15 to 60 adopts an RING-type zinc-finger fold; it reads CPICLELLTEPLSLDCGHSLCRACITVSNKEAVTSMGGKSSCPVCG. The B box-type zinc-finger motif lies at 92 to 134; that stretch reads KKRDLCDHHGEKLLLFCKEDRKVICWLCERSQEHRGHHTVLTE. The Zn(2+) site is built by C97, H100, C119, and H125. Residues 131 to 239 adopt a coiled-coil conformation; that stretch reads VLTEEVFKEC…VRELISDVEC (109 aa). Residues 283–488 enclose the B30.2/SPRY domain; it reads LSRMLQMFRE…APMTLCPPSS (206 aa).

The protein belongs to the TRIM/RBCC family. Homotrimer. Interacts (via B-box and SPRY domain) with TRIM5. As to quaternary structure, (Microbial infection) Interacts (via the B30.2/SPRY domain) with HIV-1 capsid complexes. As to expression, is the most abundant form. It is highly expressed in the placenta, spleen, colon and peripheral blood leukocytes.

The protein resides in the cytoplasm. It is found in the mitochondrion. It catalyses the reaction S-ubiquitinyl-[E2 ubiquitin-conjugating enzyme]-L-cysteine + [acceptor protein]-L-lysine = [E2 ubiquitin-conjugating enzyme]-L-cysteine + N(6)-ubiquitinyl-[acceptor protein]-L-lysine.. Its pathway is protein modification; protein ubiquitination. Functionally, functions as antiviral protein and contributes to the defense against retroviral infections. Acts as a capsid-specific restriction factor with the help of TRIM5 and prevents infection from non-host-adapted retroviruses. During influenza A virus infection, promotes programmed cell death by targeting ZBP1 for 'Lys-63'-linked polyubiquitination. In turn, promotes ZBP1 recruitment of RIPK3 to mediate virus-induced programmed necrosis. Negatively regulates the function of mitochondria by enhancing mitochondrial depolarization leading to cytochrome c release and mitochondria-dependent apoptosis. Also promotes the formation of multinucleated giant cells by means of cell fusion and phagocytosis in epithelial cells. This is E3 ubiquitin-protein ligase TRIM34 (TRIM34) from Homo sapiens (Human).